Reading from the N-terminus, the 65-residue chain is Large ribosomal subunit protein bL35 (65 aa).

The protein belongs to the bacterial ribosomal protein bL35 family.

This is Large ribosomal subunit protein bL35 from Desulforapulum autotrophicum (strain ATCC 43914 / DSM 3382 / VKM B-1955 / HRM2) (Desulfobacterium autotrophicum).